We begin with the raw amino-acid sequence, 385 residues long: Multidrug resistance protein MdtE (385 aa).

Positions 1–20 are cleaved as a signal peptide; the sequence is MNRRRKLLIPLLFCGAMLTA. Cysteine 21 carries N-palmitoyl cysteine lipidation. A lipid anchor (S-diacylglycerol cysteine) is attached at cysteine 21.

Belongs to the membrane fusion protein (MFP) (TC 8.A.1) family. As to quaternary structure, homotrimer. Part of the tripartite efflux system MdtEF-TolC, which is composed of an inner membrane transporter, MdtF, a membrane fusion protein, MdtE, and an outer membrane component, TolC. The complex forms a large protein conduit and can translocate molecules across both the inner and outer membranes.

Its subcellular location is the cell inner membrane. In terms of biological role, part of the tripartite efflux system MdtEF-TolC, which confers resistance to various compounds. The polypeptide is Multidrug resistance protein MdtE (mdtE) (Escherichia coli O157:H7).